A 207-amino-acid polypeptide reads, in one-letter code: Germin-like protein 1 (207 aa).

Positions 1–17 are cleaved as a signal peptide; that stretch reads MLRIIFLLSLLFALSND. Cys-23 and Cys-38 are oxidised to a cystine. The 147-residue stretch at 51 to 197 folds into the Cupin type-1 domain; the sequence is FSLGTPGNTT…TTFLPPATVK (147 aa). Residue Asn-58 is glycosylated (N-linked (GlcNAc...) asparagine). Mn(2+) is bound by residues His-99, His-101, Glu-106, and His-145.

The protein belongs to the germin family. As to quaternary structure, oligomer (believed to be a pentamer but probably hexamer).

It is found in the secreted. It localises to the extracellular space. Its subcellular location is the apoplast. Functionally, may play a role in plant defense. Probably has no oxalate oxidase activity even if the active site is conserved. The polypeptide is Germin-like protein 1 (GER1) (Brassica napus (Rape)).